Consider the following 109-residue polypeptide: MDDTIDDEVISAGSTITVEFSGGAETLFGGVREHVVPLDGSKIVLLEEMLRWLRDNLLTGDAGLFMQENTVRPGILVMINDTDWDLMGEIDYILQPGDHILFISTLHGG.

G109 is subject to 1-thioglycine. G109 participates in a covalent cross-link: Glycyl lysine isopeptide (Gly-Lys) (interchain with K-? in acceptor proteins).

The protein belongs to the URM1 family. Post-translationally, C-terminal thiocarboxylation occurs in 2 steps, it is first acyl-adenylated (-COAMP) via the hesA/moeB/thiF part of the MOCS3 homolog, then thiocarboxylated (-COSH) via the rhodanese domain of the MOCS3 homolog.

Its subcellular location is the cytoplasm. The protein operates within tRNA modification; 5-methoxycarbonylmethyl-2-thiouridine-tRNA biosynthesis. Functionally, acts as a sulfur carrier required for 2-thiolation of mcm(5)S(2)U at tRNA wobble positions of cytosolic tRNA(Lys), tRNA(Glu) and tRNA(Gln). Serves as sulfur donor in tRNA 2-thiolation reaction by being thiocarboxylated (-COSH) at its C-terminus by MOCS3. The sulfur is then transferred to tRNA to form 2-thiolation of mcm(5)S(2)U. Also acts as a ubiquitin-like protein (UBL) that is covalently conjugated via an isopeptide bond to lysine residues of target proteins. The thiocarboxylated form serves as substrate for conjugation and oxidative stress specifically induces the formation of UBL-protein conjugates. The sequence is that of Ubiquitin-related modifier 1 homolog from Culex quinquefasciatus (Southern house mosquito).